The following is a 483-amino-acid chain: MTRAKPEDDEYWNSSKFKAFTFDDEDDEFSRLKESKRAVNSILVDDDDDEDDVEKVSWSGEPVGSISWSVRETASSIRSGSEQNFPKIDTAPSLSKQGSGYSLSSLFKAKSKPTAFQSFSESFSETSARTYAPELRKPKSDGKDFVSDLSPEETIRRMQKGRAFSMEKFRSLQDKLLLLDEAVSVYDGNVITAVLIYLKKSLSKEILFRELMPREVALRHYIHYLKEMGEQKLLVELLKALGRTEDMALMQYKEHLNIKDEGRRRDFLKSCLSLPFSQDDSTHVQDHYTLLERQIIIEASDKKADTDIFKKFPRKASILNMPIITTLYYSCFYHYGEPEGTFSSPSNIRKTFRISEKQYITTALGARAKLKSWFDVDSLFNTKNWLGYTKKRSPIAFHRVVDILQKNSAPVQVLQEYVNLIDDPELKLSVALKYKCHDIIINTYRDLKDRQQLIVYREKLERDSPEYRKIQELLNNGQIRWKN.

Belongs to the SPE39 family. As to quaternary structure, interacts with vps33b. As to expression, high levels detected in liver and small intestine of larvae at 5 days post-fertilization.

It localises to the cytoplasm. Its subcellular location is the cytoplasmic vesicle. The protein localises to the early endosome. It is found in the recycling endosome. The protein resides in the late endosome. In terms of biological role, proposed to be involved in endosomal maturation implicating in part vps33b. In epithelial cells, the vps33b:vipas39 complex may play a role in the apical rab11a-dependent recycling pathway and in the maintenance of the apical-basolateral polarity. May play a role in lysosomal trafficking, probably via association with the core HOPS complex in a discrete population of endosomes; the functions seems to be independent of vps33b. May play a role in vesicular trafficking during spermatogenesis. May be involved in direct or indirect transcriptional regulation of E-cadherin. This is Spermatogenesis-defective protein 39 homolog (vipas39) from Danio rerio (Zebrafish).